Here is a 698-residue protein sequence, read N- to C-terminus: Serine/threonine-protein kinase Nek8 (698 aa).

The region spanning 4 to 258 is the Protein kinase domain; that stretch reads YERIRVVGRG…LSHIMAQPLC (255 aa). Residues 10-18 and Lys-33 contribute to the ATP site; that span reads VGRGAFGIV. The active-site Proton acceptor is Asp-128. Position 162 is a phosphothreonine; by autocatalysis (Thr-162). The tract at residues 281-307 is disordered; that stretch reads LTPGTPMAPGSTGSRATSARCRGVPRG. RCC1 repeat units lie at residues 415–466, 467–518, 520–571, 585–636, and 638–689; these read RGII…ALSA, DGEL…ILTS, GRVL…TLLC, SGAC…AIGA, and GEVY…LAVR.

This sequence belongs to the protein kinase superfamily. NEK Ser/Thr protein kinase family. NIMA subfamily. As to quaternary structure, interacts with PKD2; may regulate PKD2 targeting to the cilium. Interacts with ANKS6. Component of a complex containing at least ANKS6, INVS, NEK8 and NPHP3. ANKS6 may organize complex assembly by linking INVS and NPHP3 to NEK8 and INVS may target it to the proximal ciliary axoneme. Interacts with ANKS3. The cofactor is Mg(2+).

Its subcellular location is the cytoplasm. The protein localises to the cytoskeleton. The protein resides in the cell projection. It is found in the cilium. It localises to the cilium axoneme. Its subcellular location is the microtubule organizing center. The protein localises to the centrosome. It carries out the reaction L-seryl-[protein] + ATP = O-phospho-L-seryl-[protein] + ADP + H(+). The catalysed reaction is L-threonyl-[protein] + ATP = O-phospho-L-threonyl-[protein] + ADP + H(+). Required for renal tubular integrity. May regulate local cytoskeletal structure in kidney tubule epithelial cells. May regulate ciliary biogenesis through targeting of proteins to the cilia. Plays a role in organogenesis and is involved in the regulation of the Hippo signaling pathway. The chain is Serine/threonine-protein kinase Nek8 (Nek8) from Rattus norvegicus (Rat).